Consider the following 299-residue polypeptide: Arginase (299 aa).

Mn(2+)-binding residues include His99, Asp122, His124, and Asp126. Substrate-binding positions include 124–128, 135–137, and Asp178; these read HGDVN and SGN. Mn(2+)-binding residues include Asp226 and Asp228. Residues Thr240 and Glu271 each coordinate substrate.

The protein belongs to the arginase family. Homohexamer. Requires Mn(2+) as cofactor.

The enzyme catalyses L-arginine + H2O = urea + L-ornithine. Its pathway is nitrogen metabolism; urea cycle; L-ornithine and urea from L-arginine: step 1/1. Functionally, controls arginine catabolism. The sequence is that of Arginase (rocF) from Bacillus caldovelox.